Consider the following 634-residue polypeptide: Chaperone protein HtpG (634 aa).

An a; substrate-binding region spans residues 1–342; it reads MTVASHKETL…SNDLPLNISR (342 aa). The b stretch occupies residues 343–559; sequence EILQNNRVID…QHDMSGYLER (217 aa). Residues 560–634 are c; sequence LLKEAGQQAP…LNSLLLAMAD (75 aa).

Belongs to the heat shock protein 90 family. Homodimer.

The protein resides in the cytoplasm. Its function is as follows. Molecular chaperone. Has ATPase activity. The protein is Chaperone protein HtpG of Nitrosococcus oceani (strain ATCC 19707 / BCRC 17464 / JCM 30415 / NCIMB 11848 / C-107).